A 357-amino-acid chain; its full sequence is Isopentenyl-diphosphate delta-isomerase (357 aa).

Position 12–13 (12–13) interacts with substrate; that stretch reads RK. FMN is bound by residues Ser-70, 71–73, Ser-101, and Asn-130; that span reads SMT. 101-103 is a substrate binding site; that stretch reads SMR. Substrate is bound at residue Gln-165. Glu-166 is a binding site for Mg(2+). Residues Lys-197 and 310 to 311 each bind FMN; that span reads AR.

The protein belongs to the IPP isomerase type 2 family. Homooctamer. Dimer of tetramers. FMN serves as cofactor. NADPH is required as a cofactor. Requires Mg(2+) as cofactor.

Its subcellular location is the cytoplasm. It carries out the reaction isopentenyl diphosphate = dimethylallyl diphosphate. Functionally, involved in the biosynthesis of isoprenoids. Catalyzes the 1,3-allylic rearrangement of the homoallylic substrate isopentenyl (IPP) to its allylic isomer, dimethylallyl diphosphate (DMAPP). In Pelodictyon phaeoclathratiforme (strain DSM 5477 / BU-1), this protein is Isopentenyl-diphosphate delta-isomerase.